The primary structure comprises 219 residues: Deoxyribose-phosphate aldolase (219 aa).

Residue Asp88 is the Proton donor/acceptor of the active site. Lys150 acts as the Schiff-base intermediate with acetaldehyde in catalysis. The active-site Proton donor/acceptor is Lys179.

This sequence belongs to the DeoC/FbaB aldolase family. DeoC type 1 subfamily.

It localises to the cytoplasm. It catalyses the reaction 2-deoxy-D-ribose 5-phosphate = D-glyceraldehyde 3-phosphate + acetaldehyde. It participates in carbohydrate degradation; 2-deoxy-D-ribose 1-phosphate degradation; D-glyceraldehyde 3-phosphate and acetaldehyde from 2-deoxy-alpha-D-ribose 1-phosphate: step 2/2. In terms of biological role, catalyzes a reversible aldol reaction between acetaldehyde and D-glyceraldehyde 3-phosphate to generate 2-deoxy-D-ribose 5-phosphate. The protein is Deoxyribose-phosphate aldolase of Aquifex aeolicus (strain VF5).